Reading from the N-terminus, the 199-residue chain is V-type ATP synthase subunit E (199 aa).

Belongs to the V-ATPase E subunit family.

Functionally, produces ATP from ADP in the presence of a proton gradient across the membrane. The sequence is that of V-type ATP synthase subunit E from Borrelia garinii subsp. bavariensis (strain ATCC BAA-2496 / DSM 23469 / PBi) (Borreliella bavariensis).